We begin with the raw amino-acid sequence, 179 residues long: ATP synthase subunit delta (179 aa).

It belongs to the ATPase delta chain family. As to quaternary structure, F-type ATPases have 2 components, F(1) - the catalytic core - and F(0) - the membrane proton channel. F(1) has five subunits: alpha(3), beta(3), gamma(1), delta(1), epsilon(1). F(0) has three main subunits: a(1), b(2) and c(10-14). The alpha and beta chains form an alternating ring which encloses part of the gamma chain. F(1) is attached to F(0) by a central stalk formed by the gamma and epsilon chains, while a peripheral stalk is formed by the delta and b chains.

It localises to the cell inner membrane. In terms of biological role, f(1)F(0) ATP synthase produces ATP from ADP in the presence of a proton or sodium gradient. F-type ATPases consist of two structural domains, F(1) containing the extramembraneous catalytic core and F(0) containing the membrane proton channel, linked together by a central stalk and a peripheral stalk. During catalysis, ATP synthesis in the catalytic domain of F(1) is coupled via a rotary mechanism of the central stalk subunits to proton translocation. Functionally, this protein is part of the stalk that links CF(0) to CF(1). It either transmits conformational changes from CF(0) to CF(1) or is implicated in proton conduction. This Thermosipho melanesiensis (strain DSM 12029 / CIP 104789 / BI429) protein is ATP synthase subunit delta.